The primary structure comprises 409 residues: MDLKMLLIFIAFLLPSVLGFPIQDNYENSTATTESTQVTTEEDIYDSPSPAETDSEDELIFNRILEVNKDSSQYLQEGDIVPRRSRSAINCRNCYWPQSRDGIVRIPYVLDPTYEENHVKGIREAMAEFETLTCINFVKRKTERDYLIIRSADGCWSNYGKVGGGQTISVMKGGCMWKGIIQHELDHALGFLHEHSRSDRDKYVRIMWEYISPADRPDFKKFENSNNLGLPYDYSSVMHYGPHTFTNTTGKATIVPVPDGSVHIGQRLGLSNLDVAKINRLYNCSRCSTIIDAAFGSLKSANYPRNYSDNTNCVWLIRTRSRKISLHFRAFELRTTRGCQGDYVKVYDGSSKYSTVLMDKTCGSQIPTDVVSSSNLMLIEFVTDGADTASGFQATFTSAKIQRRFKIRN.

An N-terminal signal peptide occupies residues 1-19 (MDLKMLLIFIAFLLPSVLG). Positions 30–39 (TATTESTQVT) are enriched in low complexity. The interval 30-54 (TATTESTQVTTEEDIYDSPSPAETD) is disordered. The region spanning 87 to 285 (SAINCRNCYW…AKINRLYNCS (199 aa)) is the Peptidase M12A domain. 5 disulfide bridges follow: Cys91-Cys94, Cys134-Cys284, Cys155-Cys175, Cys287-Cys313, and Cys339-Cys362. Residue His183 coordinates Zn(2+). Glu184 is an active-site residue. Residues His187 and His193 each coordinate Zn(2+). The 113-residue stretch at 287-399 (CSTIIDAAFG…SGFQATFTSA (113 aa)) folds into the CUB domain.

Zn(2+) serves as cofactor. Expressed in ovary and gonads.

It is found in the cytoplasm. The protein resides in the cell membrane. The protein localises to the cytoplasmic vesicle. Its subcellular location is the secretory vesicle. It localises to the cortical granule. Functionally, probable oocyte-specific oolemmal receptor involved in sperm and egg adhesion and fertilization. May act as a protease. This Gallus gallus (Chicken) protein is Astacin-like metalloendopeptidase (ASTL).